We begin with the raw amino-acid sequence, 105 residues long: Small ribosomal subunit protein uS10 (105 aa).

It belongs to the universal ribosomal protein uS10 family. As to quaternary structure, part of the 30S ribosomal subunit.

Involved in the binding of tRNA to the ribosomes. The polypeptide is Small ribosomal subunit protein uS10 (Lawsonia intracellularis (strain PHE/MN1-00)).